The following is a 441-amino-acid chain: Proline--tRNA ligase (441 aa).

This sequence belongs to the class-II aminoacyl-tRNA synthetase family. ProS type 2 subfamily. As to quaternary structure, homodimer.

The protein resides in the cytoplasm. The catalysed reaction is tRNA(Pro) + L-proline + ATP = L-prolyl-tRNA(Pro) + AMP + diphosphate. In terms of biological role, catalyzes the attachment of proline to tRNA(Pro) in a two-step reaction: proline is first activated by ATP to form Pro-AMP and then transferred to the acceptor end of tRNA(Pro). This is Proline--tRNA ligase from Afipia carboxidovorans (strain ATCC 49405 / DSM 1227 / KCTC 32145 / OM5) (Oligotropha carboxidovorans).